We begin with the raw amino-acid sequence, 955 residues long: Mediator of RNA polymerase II transcription subunit 16 (955 aa).

It belongs to the Mediator complex subunit 16 family. In terms of assembly, component of the Mediator complex.

It is found in the nucleus. Its function is as follows. Component of the Mediator complex, a coactivator involved in the regulated transcription of nearly all RNA polymerase II-dependent genes. Mediator functions as a bridge to convey information from gene-specific regulatory proteins to the basal RNA polymerase II transcription machinery. Mediator is recruited to promoters by direct interactions with regulatory proteins and serves as a scaffold for the assembly of a functional preinitiation complex with RNA polymerase II and the general transcription factors. In Neosartorya fischeri (strain ATCC 1020 / DSM 3700 / CBS 544.65 / FGSC A1164 / JCM 1740 / NRRL 181 / WB 181) (Aspergillus fischerianus), this protein is Mediator of RNA polymerase II transcription subunit 16 (sin4).